We begin with the raw amino-acid sequence, 114 residues long: Cytochrome c2 (114 aa).

A Pyrrolidone carboxylic acid modification is found at Q1. Heme c contacts are provided by C13, C16, H17, and M93.

It belongs to the cytochrome c family. Binds 1 heme c group covalently per subunit.

The protein localises to the periplasm. Cytochrome c2 is found mainly in purple, non-sulfur, photosynthetic bacteria where it functions as the electron donor to the oxidized bacteriochlorophyll in the photophosphorylation pathway. However, it may also have a role in the respiratory chain and is found in some non-photosynthetic bacteria. The polypeptide is Cytochrome c2 (Rhodopseudomonas palustris).